A 361-amino-acid polypeptide reads, in one-letter code: Peptide chain release factor 1 (361 aa).

Gln235 carries the N5-methylglutamine modification.

It belongs to the prokaryotic/mitochondrial release factor family. Methylated by PrmC. Methylation increases the termination efficiency of RF1.

Its subcellular location is the cytoplasm. Its function is as follows. Peptide chain release factor 1 directs the termination of translation in response to the peptide chain termination codons UAG and UAA. The sequence is that of Peptide chain release factor 1 from Xanthomonas oryzae pv. oryzae (strain MAFF 311018).